The following is a 216-amino-acid chain: ATP phosphoribosyltransferase (216 aa).

It belongs to the ATP phosphoribosyltransferase family. Short subfamily. Heteromultimer composed of HisG and HisZ subunits.

The protein localises to the cytoplasm. It carries out the reaction 1-(5-phospho-beta-D-ribosyl)-ATP + diphosphate = 5-phospho-alpha-D-ribose 1-diphosphate + ATP. It participates in amino-acid biosynthesis; L-histidine biosynthesis; L-histidine from 5-phospho-alpha-D-ribose 1-diphosphate: step 1/9. Its function is as follows. Catalyzes the condensation of ATP and 5-phosphoribose 1-diphosphate to form N'-(5'-phosphoribosyl)-ATP (PR-ATP). Has a crucial role in the pathway because the rate of histidine biosynthesis seems to be controlled primarily by regulation of HisG enzymatic activity. The protein is ATP phosphoribosyltransferase of Acidovorax ebreus (strain TPSY) (Diaphorobacter sp. (strain TPSY)).